A 337-amino-acid chain; its full sequence is Diacylglycerol O-acyltransferase 2-like protein 6 (337 aa).

Helical transmembrane passes span 22-42 (IPVYVLLGTLSILGMPYLLLF) and 102-122 (YIILSHPHGILSYGAFINFAT).

It belongs to the diacylglycerol acyltransferase family.

Its subcellular location is the endoplasmic reticulum membrane. The enzyme catalyses 1,2-di-(9Z-octadecenoyl)-sn-glycerol + (9Z)-octadecenoyl-CoA = 1,2,3-tri-(9Z-octadecenoyl)-glycerol + CoA. Diglyceride acyltransferase that uses fatty acyl-CoA as substrate. Particularly active with oleate as a substrate. Has no wax synthase activity to produce wax esters. The sequence is that of Diacylglycerol O-acyltransferase 2-like protein 6 (Dgat2l6) from Mus musculus (Mouse).